A 334-amino-acid chain; its full sequence is Petrobactin import system permease protein FatD (334 aa).

The next 9 membrane-spanning stretches (helical) occupy residues 24 to 44 (FIIA…TGVY), 64 to 84 (TVAL…MQLI), 98 to 118 (IEWS…PTLV), 119 to 139 (QRMT…FLFL), 152 to 172 (IIGL…GLLF), 197 to 217 (LWLI…LTLA), 234 to 254 (IVLF…AVIG), 277 to 297 (SNLP…DIIS), and 304 to 324 (FELP…ITIL).

Belongs to the binding-protein-dependent transport system permease family. FecCD subfamily. The complex is composed of two ATP-binding proteins (FatE), two transmembrane proteins (FatC and FatD) and a solute-binding protein (FpuA).

Its subcellular location is the cell membrane. Functionally, part of an ABC transporter complex involved in ferric-petrobactin uptake. Probably responsible for the translocation of the substrate across the membrane. This chain is Petrobactin import system permease protein FatD, found in Bacillus anthracis.